The sequence spans 847 residues: MASPAFMRFLPRCGAAAAFGTLLGLAGCQSWLDDRYADSLPPTSGVQPIKGLAQNVSIRRNALGMPLIETGTFHDALFALGYVHASDRLSQMVSLRLLAQGRLAEMVGPGALEIDRFMRTVNLRQAAEIQYRNASPRLQRFFEVYARGVNAYLYRYRDKLPMDLAQSGYRPEYWKPEDSALVFALLNFGLAVNLQEEIASLTLAQKVGSDKLAWLTPTYPDENLPFDEAEKLKGLRLDGQVPGLAGVEGAARQVAALSMLGVAASNNWAIAPQRSRSGKSLMANDTHLPLSMPSVWNYVQIRSPKYQAAGVSIAGLPGVVAGFNGKLAWGMTMVLGDNQDLYLEQLRRQGNRLYYLADGKWQPTRERQETFFIKGQRPIREVIHETRHGPLLNSALGERKNILQPLPLKSGYGLAYRSIQQEADKTLDGFFDLSRAKTIEQAFDATREIRAMPLNIVFADEKHIGWQVTGRYPNRKEGRGLLPSPGWDGRYDWDGYADPILHPSDQDPQQGWLGTANHRTVQPGYGAQLSNSWYYPERAERIAQLAGASKSHDTQSMIRMQYDQTSLFVAKLQAMFDNPGMALPLRQAIDALPEAQRSRAREAYDRLMAFDGKLTASSSDAALYGAFLHESARQIFLDELGPEDGPAWKAFVETANLSYSAQADHLLGRDDSPFWDDTRTPQKEDKPAILARSLAAAVEFCEQRLGSERKAWQWGKLHTYEWQSDSSKMAPYLGAGERAGLGAIKGYLDRGPYPAGGDHTTLDVSAYGWGQDFDTWLIPAMRLIVDFGQSEPMIGVNSSGQSGNPASPHYADGIDAWLKGRYVSFPFQPQNLDRVYGNKRLTLTPAR.

Positions 1–26 (MASPAFMRFLPRCGAAAAFGTLLGLA) are cleaved as a signal peptide. Serine 265 (nucleophile) is an active-site residue.

This sequence belongs to the peptidase S45 family. Heterodimer of an alpha subunit and a beta subunit processed from the same precursor.

The protein localises to the periplasm. It catalyses the reaction an N-acyl-L-homoserine lactone + H2O = L-homoserine lactone + a carboxylate. Its function is as follows. Catalyzes the deacylation of acyl-homoserine lactone (AHL or acyl-HSL), releasing homoserine lactone (HSL) and the corresponding fatty acid. Possesses a specificity for the degradation of long-chain acyl-HSLs (side chains of seven or more carbons in length). Appears to be the acyl-HSL acylase that underlies the ability of P.aeruginosa to degrade and utilize certain acyl-HSLs as growth nutrients, including one of its own quorum signals, 3-oxo-C12-HSL. Is thought to have a role in quorum quenching. The chain is Acyl-homoserine lactone acylase QuiP (quiP) from Pseudomonas aeruginosa (strain ATCC 15692 / DSM 22644 / CIP 104116 / JCM 14847 / LMG 12228 / 1C / PRS 101 / PAO1).